A 317-amino-acid polypeptide reads, in one-letter code: D-alanine--D-alanine ligase (317 aa).

The region spanning 103 to 299 (KHIFRSLNID…FNELVKIIIE (197 aa)) is the ATP-grasp domain. 130–183 (KIDYPYVLKPINEGSSIGVYIIFSHEDYLELKDNSSTIMEKMIVEEYIPGIELH) serves as a coordination point for ATP. Asp251, Glu265, and Asn267 together coordinate Mg(2+).

Belongs to the D-alanine--D-alanine ligase family. Requires Mg(2+) as cofactor. Mn(2+) is required as a cofactor.

Its subcellular location is the cytoplasm. It catalyses the reaction 2 D-alanine + ATP = D-alanyl-D-alanine + ADP + phosphate + H(+). The protein operates within cell wall biogenesis; peptidoglycan biosynthesis. Cell wall formation. The sequence is that of D-alanine--D-alanine ligase from Wolbachia sp. subsp. Drosophila simulans (strain wRi).